Here is a 57-residue protein sequence, read N- to C-terminus: Neurotoxin Oh9-1 (57 aa).

Intrachain disulfides connect Cys-3-Cys-19, Cys-12-Cys-37, Cys-41-Cys-49, and Cys-50-Cys-55.

Belongs to the three-finger toxin family. Short-chain subfamily. In terms of tissue distribution, expressed by the venom gland.

The protein localises to the secreted. Functionally, this toxin binds and inhibits rat muscle adult alpha-1-beta-1-delta-epsilon/CHRNA1-CHRNB1-CHRND-CHRNE (IC(50)=3.1 uM) and fetal alpha-1-beta-1-gamma-delta/CHRNA1-CHRNB1-CHRNG-CHRND (IC(50)=5.6 uM) nicotinic acetylcholine receptors (nAChR). Shows a very low inhibition on rat neuronal alpha-3-beta-2/CHRNA3-CHRNB2 nAChR (IC(50)=50.2 uM) nAChR. Binds to the acetylcholine-binding pocket and acts as a competitive antagonist. Does not inhibit human glycine receptor (homopentamer composed of alpha-1 subunits, GLRA1), but seems to potentiate it (about 2-fold increased activity). The protein is Neurotoxin Oh9-1 of Ophiophagus hannah (King cobra).